Consider the following 529-residue polypeptide: Serine hydroxymethyltransferase 3, chloroplastic (529 aa).

Residues 1-60 (MQACCGGNSMASLQQPGRVQGSVFPPIMPPVTKFSQQLKFNISKPFRSSFLKRNLVSEMR) constitute a chloroplast transit peptide. An N6-(pyridoxal phosphate)lysine modification is found at Lys314.

It belongs to the SHMT family. As to quaternary structure, homotetramer. Requires pyridoxal 5'-phosphate as cofactor.

The protein localises to the plastid. It localises to the chloroplast. The catalysed reaction is (6R)-5,10-methylene-5,6,7,8-tetrahydrofolate + glycine + H2O = (6S)-5,6,7,8-tetrahydrofolate + L-serine. The protein operates within one-carbon metabolism; tetrahydrofolate interconversion. Inhibited by 5-CH3-H4PteGlu1/5 and 5-HCO-H4PteGlu1/5 in vitro. In terms of biological role, catalyzes the interconversion of serine and glycine and directs the hydroxymethyl moiety of serine into the metabolic network of H4PteGlu(n)-bound one-carbon units. The sequence is that of Serine hydroxymethyltransferase 3, chloroplastic from Arabidopsis thaliana (Mouse-ear cress).